The following is a 325-amino-acid chain: Beta-ketoacyl-[acyl-carrier-protein] synthase III (325 aa).

Residues C116 and H252 contribute to the active site. Residues 253 to 257 (QANLR) are ACP-binding. Residue N282 is part of the active site.

The protein belongs to the thiolase-like superfamily. FabH family. As to quaternary structure, homodimer.

The protein resides in the cytoplasm. It carries out the reaction butanoyl-CoA + malonyl-[ACP] + H(+) = 3-oxohexanoyl-[ACP] + CO2 + CoA. The enzyme catalyses hexanoyl-CoA + malonyl-[ACP] + H(+) = 3-oxooctanoyl-[ACP] + CO2 + CoA. It catalyses the reaction octanoyl-CoA + malonyl-[ACP] + H(+) = 3-oxodecanoyl-[ACP] + CO2 + CoA. The catalysed reaction is decanoyl-CoA + malonyl-[ACP] + H(+) = 3-oxododecanoyl-[ACP] + CO2 + CoA. It carries out the reaction 2-methylpropanoyl-CoA + malonyl-[ACP] + H(+) = 4-methyl-3-oxopentanoyl-[ACP] + CO2 + CoA. The enzyme catalyses 3-methylbutanoyl-CoA + malonyl-[ACP] + H(+) = 5-methyl-3-oxohexanoyl-[ACP] + CO2 + CoA. It catalyses the reaction malonyl-[ACP] + acetyl-CoA + H(+) = 3-oxobutanoyl-[ACP] + CO2 + CoA. The protein operates within lipid metabolism; fatty acid biosynthesis. Its function is as follows. Catalyzes the condensation reaction of fatty acid synthesis by the addition to an acyl acceptor of two carbons from malonyl-ACP. Catalyzes the first condensation reaction which initiates fatty acid synthesis and may therefore play a role in governing the total rate of fatty acid production. Possesses both acetoacetyl-ACP synthase and acetyl transacylase activities. Can use a wide range of acyl-CoAs as the primer substrate in vitro, with a slight preference for short, medium-straight chain acyl-CoAs. Can also use branched-chain acyl-CoAs and acetyl-CoA. This is Beta-ketoacyl-[acyl-carrier-protein] synthase III from Xanthomonas campestris pv. campestris (strain 8004).